We begin with the raw amino-acid sequence, 243 residues long: Vesicle-associated membrane protein-associated protein B/C (243 aa).

Position 2 is an N-acetylalanine (A2). Residues 2-222 (AKVEQVLSLE…PTGKEEGLST (221 aa)) are Cytoplasmic-facing. The MSP domain occupies 7-124 (VLSLEPQHEL…MDSKLRCVFE (118 aa)). S146 bears the Phosphoserine mark. Residue K147 forms a Glycyl lysine isopeptide (Lys-Gly) (interchain with G-Cter in SUMO1) linkage. Residue T150 is modified to Phosphothreonine. S156, S158, S159, S160, and S206 each carry phosphoserine. A coiled-coil region spans residues 159–196 (SSLDDTEVKKVMEECKRLQGEVQRLREENKQFKEEDGL). Residues 223–243 (RLLALVVLFFIVGVIIGKIAL) form a helical; Anchor for type IV membrane protein membrane-spanning segment.

This sequence belongs to the VAMP-associated protein (VAP) (TC 9.B.17) family. In terms of assembly, homodimer, and heterodimer with VAPA. Interacts with VAMP1 and VAMP2. Interacts (via MSP domain) with ZFYVE27. Interacts with RMDN3. Interacts with KIF5A in a ZFYVE27-dependent manner. Interacts (via MSP domain) with STARD3 (via phospho-FFAT motif). Interacts with STARD3NL (via FFAT motif). Interacts with CERT1. Interacts with PLEKHA3 and SACM1L to form a ternary complex. Interacts with VPS13A (via FFAT motif). Interacts with RB1CC1 (via phosphorylated FFAT motif), MIGA2 (via phosphorylated FFAT motif), RMDN3 (via phosphorylated FFAT motif), OSBPL1A (via FFAT motif), KCNB1 (via phosphorylated FFAT motif) and KCNB2 (via phosphorylated FFAT motif). Interacts (via MSP domain) with WDR44 (via FFAT motif); the interactions connect the endoplasmic reticulum (ER) with the endosomal tubule. As to quaternary structure, (Microbial infection) Interacts (via MSP domain) with hepatitis C virus (HCV) non-structural protein 5A (via disordered domain D3). Interacts with HCV RNA-directed RNA polymerase. Ubiquitous. Isoform 1 predominates.

The protein resides in the endoplasmic reticulum membrane. Functionally, endoplasmic reticulum (ER)-anchored protein that mediates the formation of contact sites between the ER and endosomes via interaction with FFAT motif-containing proteins such as STARD3 or WDR44. Interacts with STARD3 in a FFAT motif phosphorylation dependent manner. Via interaction with WDR44 participates in neosynthesized protein export. Participates in the endoplasmic reticulum unfolded protein response (UPR) by inducing ERN1/IRE1 activity. Involved in cellular calcium homeostasis regulation. The polypeptide is Vesicle-associated membrane protein-associated protein B/C (Homo sapiens (Human)).